We begin with the raw amino-acid sequence, 353 residues long: RNA 3'-terminal phosphate cyclase (353 aa).

ATP is bound by residues Q100 and 289-292 (HMSD). H315 (tele-AMP-histidine intermediate) is an active-site residue.

The protein belongs to the RNA 3'-terminal cyclase family. Type 1 subfamily.

The protein resides in the cytoplasm. The enzyme catalyses a 3'-end 3'-phospho-ribonucleotide-RNA + ATP = a 3'-end 2',3'-cyclophospho-ribonucleotide-RNA + AMP + diphosphate. In terms of biological role, catalyzes the conversion of 3'-phosphate to a 2',3'-cyclic phosphodiester at the end of RNA. The mechanism of action of the enzyme occurs in 3 steps: (A) adenylation of the enzyme by ATP; (B) transfer of adenylate to an RNA-N3'P to produce RNA-N3'PP5'A; (C) and attack of the adjacent 2'-hydroxyl on the 3'-phosphorus in the diester linkage to produce the cyclic end product. The biological role of this enzyme is unknown but it is likely to function in some aspects of cellular RNA processing. The chain is RNA 3'-terminal phosphate cyclase from Ignicoccus hospitalis (strain KIN4/I / DSM 18386 / JCM 14125).